Here is a 209-residue protein sequence, read N- to C-terminus: Probable spore germination lipoprotein YlaJ (209 aa).

The signal sequence occupies residues 1–16 (MRILFIIIQLTLILSA). C17 carries N-palmitoyl cysteine lipidation. A lipid anchor (S-diacylglycerol cysteine) is attached at C17. 2 disordered regions span residues 26–54 (QNVE…KDNG) and 165–209 (NDVI…NNND). Basic and acidic residues-rich tracts occupy residues 28–54 (VEKE…KDNG) and 183–209 (LNRK…NNND).

It is found in the forespore inner membrane. Functionally, probably contributes, directly or indirectly, to early events in germination. The protein is Probable spore germination lipoprotein YlaJ (ylaJ) of Bacillus subtilis (strain 168).